Reading from the N-terminus, the 316-residue chain is Pantothenate kinase (316 aa).

95-102 is a binding site for ATP; it reads GSVAVGKS.

It belongs to the prokaryotic pantothenate kinase family.

The protein resides in the cytoplasm. It carries out the reaction (R)-pantothenate + ATP = (R)-4'-phosphopantothenate + ADP + H(+). It functions in the pathway cofactor biosynthesis; coenzyme A biosynthesis; CoA from (R)-pantothenate: step 1/5. The chain is Pantothenate kinase from Salmonella gallinarum (strain 287/91 / NCTC 13346).